Reading from the N-terminus, the 639-residue chain is Chaperone protein DnaK (639 aa).

Residue Thr-195 is modified to Phosphothreonine; by autocatalysis. Over residues 601–618 (NAAAGAAPAGEPAPGEPQ) the composition is skewed to low complexity. Residues 601–639 (NAAAGAAPAGEPAPGEPQAEQKKDDGVIDAEYVDVDEKK) form a disordered region. The segment covering 627 to 639 (VIDAEYVDVDEKK) has biased composition (acidic residues).

It belongs to the heat shock protein 70 family.

Acts as a chaperone. The chain is Chaperone protein DnaK from Acidobacterium capsulatum (strain ATCC 51196 / DSM 11244 / BCRC 80197 / JCM 7670 / NBRC 15755 / NCIMB 13165 / 161).